Reading from the N-terminus, the 320-residue chain is Putative protein FRMPD2-like (320 aa).

2 PDZ domains span residues 1–46 (MTSI…ERRV) and 90–178 (EVKL…CRPP). The tract at residues 215–239 (DQEDSWRDSASPDAGEGLGLRPESS) is disordered.

The polypeptide is Putative protein FRMPD2-like (Homo sapiens (Human)).